Reading from the N-terminus, the 134-residue chain is ATP synthase epsilon chain (134 aa).

Positions 94–104 (AKLAKSRAESH) are enriched in basic and acidic residues. A disordered region spans residues 94–115 (AKLAKSRAESHLEEDDDNTDIN).

Belongs to the ATPase epsilon chain family. In terms of assembly, F-type ATPases have 2 components, CF(1) - the catalytic core - and CF(0) - the membrane proton channel. CF(1) has five subunits: alpha(3), beta(3), gamma(1), delta(1), epsilon(1). CF(0) has three main subunits: a, b and c.

Its subcellular location is the cell membrane. Functionally, produces ATP from ADP in the presence of a proton gradient across the membrane. The chain is ATP synthase epsilon chain from Staphylococcus epidermidis (strain ATCC 35984 / DSM 28319 / BCRC 17069 / CCUG 31568 / BM 3577 / RP62A).